A 415-amino-acid chain; its full sequence is Peptide chain release factor subunit 1 (415 aa).

The protein belongs to the eukaryotic release factor 1 family. Heterodimer of two subunits, one of which binds GTP.

The protein localises to the cytoplasm. Its function is as follows. Directs the termination of nascent peptide synthesis (translation) in response to the termination codons UAA, UAG and UGA. The sequence is that of Peptide chain release factor subunit 1 from Thermococcus kodakarensis (strain ATCC BAA-918 / JCM 12380 / KOD1) (Pyrococcus kodakaraensis (strain KOD1)).